The chain runs to 198 residues: Coagulation factor XIII A chain (198 aa).

The tract at residues 1–36 (MSESSGTAFGGRRAIPPNTSNAAENDPPTVELQGLV) is disordered. N-acetylserine is present on Ser-2. The propeptide at 2-38 (SESSGTAFGGRRAIPPNTSNAAENDPPTVELQGLVPR) is activation peptide.

Belongs to the transglutaminase superfamily. Transglutaminase family. In terms of assembly, tetramer of two A chains (F13A1) and two B (F13B) chains. Ca(2+) serves as cofactor. In terms of processing, the activation peptide is released by thrombin.

The protein resides in the cytoplasm. It localises to the secreted. It carries out the reaction L-glutaminyl-[protein] + L-lysyl-[protein] = [protein]-L-lysyl-N(6)-5-L-glutamyl-[protein] + NH4(+). Its function is as follows. Factor XIII is activated by thrombin and calcium ion to a transglutaminase that catalyzes the formation of gamma-glutamyl-epsilon-lysine cross-links between fibrin chains, thus stabilizing the fibrin clot. Also cross-link alpha-2-plasmin inhibitor, or fibronectin, to the alpha chains of fibrin. This chain is Coagulation factor XIII A chain (F13A1), found in Bos taurus (Bovine).